Reading from the N-terminus, the 316-residue chain is GPI-specific phospholipase A2-like PGAP3 (316 aa).

Positions 1–18 (MAPFLVLFLAGVVAASRG) are cleaved as a signal peptide. At 19–93 (DREPVYRDCV…QFHGKWPFSR (75 aa)) the chain is on the lumenal side. N35 carries an N-linked (GlcNAc...) asparagine glycan. The helical transmembrane segment at 94–114 (FLFFQEPASALASFLNGVASL) threads the bilayer. Residues 115–132 (LMLLRYRSSVPSSCQMYR) are Cytoplasmic-facing. A helical membrane pass occupies residues 133–153 (TCLAFSMVSVNAWFWSTIFHT). The Lumenal segment spans residues 154–163 (RDTALTEKMD). Residues 164 to 180 (YFCASSVILHSIYLCCM) form a helical membrane-spanning segment. Residues 181 to 182 (RT) lie on the Cytoplasmic side of the membrane. The chain crosses the membrane as a helical span at residues 183 to 203 (FGLQYPSIANGFGAFLVLLFA). At 204 to 218 (CHVSYLTLGRFDYSY) the chain is on the lumenal side. The chain crosses the membrane as a helical span at residues 219-239 (NMAANTGFGVLNLMWWLAWCF). Residues 240–251 (RRRFHQPYLWKC) lie on the Cytoplasmic side of the membrane. A helical membrane pass occupies residues 252-272 (VLVVISLQSLALLELLDFPPV). Residue M273 is a topological domain, lumenal. A helical transmembrane segment spans residues 274-293 (WILDAHALWHFSTVPLHFLF). Residues 294–316 (YSFLKDDSLYLLKINHDDIPKLD) are Cytoplasmic-facing.

The protein belongs to the PGAP3 family.

The protein localises to the golgi apparatus membrane. In terms of biological role, involved in the fatty acid remodeling steps of GPI-anchor maturation where the unsaturated acyl chain at sn-2 of inositol phosphate is replaced by a saturated stearoyl chain. May catalyze the first step of the fatty acid remodeling, by removing the unsaturated acyl chain at sn-2 of inositol phosphate, generating a lyso-GPI intermediate. The fatty acid remodeling steps is critical for the integration of GPI-APs into lipid rafts. The sequence is that of GPI-specific phospholipase A2-like PGAP3 from Xenopus tropicalis (Western clawed frog).